Consider the following 391-residue polypeptide: MFGTATRDNATRVLLLGSGELGKEVAIECQRLGLEVIACDRYADAPAMQVAHRSHVFDMLDADALQQVIDLEKPHFVVPEIEAIATSKLVELEAQGLNVVPTANATRLTMNREGIRRLAAEELGLPTSAYQFADSYESFAAAVETIGLPCVCKPVMSSSGKGQSVIRTPEQIEAAWQYAQQGGRSGAGRVIVEGFVDFDYEITLLTVRAVDGVHFCAPIGHRQEDGDYRESWQPQVMSENAIKAAEYVAEQVVNALGGYGLFGVELFVKGDKVIFNEVSPRPHDTGMVTLISQELSEFALHVRAFTGLPIGQIVQYGPSASAAILGQGQSQNIQFNGLDDALSIPHTQVRLFGKPDIAGRRRLGVALSRGKTTQEATDRAIECAKAVKIHY.

Residues 20-21 (EL) and Glu-80 contribute to the N(1)-(5-phospho-beta-D-ribosyl)glycinamide site. Residues Arg-112, Lys-153, 158 to 163 (SSGKGQ), 193 to 196 (EGFV), and Glu-201 each bind ATP. Residues 117 to 306 (RLAAEELGLP…EFALHVRAFT (190 aa)) form the ATP-grasp domain. 2 residues coordinate Mg(2+): Glu-265 and Glu-277. N(1)-(5-phospho-beta-D-ribosyl)glycinamide is bound by residues Asp-284, Lys-354, and 361–362 (RR).

The protein belongs to the PurK/PurT family. Homodimer.

The catalysed reaction is N(1)-(5-phospho-beta-D-ribosyl)glycinamide + formate + ATP = N(2)-formyl-N(1)-(5-phospho-beta-D-ribosyl)glycinamide + ADP + phosphate + H(+). It functions in the pathway purine metabolism; IMP biosynthesis via de novo pathway; N(2)-formyl-N(1)-(5-phospho-D-ribosyl)glycinamide from N(1)-(5-phospho-D-ribosyl)glycinamide (formate route): step 1/1. Involved in the de novo purine biosynthesis. Catalyzes the transfer of formate to 5-phospho-ribosyl-glycinamide (GAR), producing 5-phospho-ribosyl-N-formylglycinamide (FGAR). Formate is provided by PurU via hydrolysis of 10-formyl-tetrahydrofolate. The protein is Formate-dependent phosphoribosylglycinamide formyltransferase of Vibrio cholerae serotype O1 (strain ATCC 39315 / El Tor Inaba N16961).